Reading from the N-terminus, the 346-residue chain is Olfactory receptor 13D1 (346 aa).

At 1 to 57 (MYRFTDFDVSNISIYLNHVLFYTTQQAGDLEHMETRNYSAMTEFFLVGLSQYPELQL) the chain is on the extracellular side. An N-linked (GlcNAc...) asparagine glycan is attached at N37. Residues 58–78 (FLFLLCLIMYMIILLGNSLLI) traverse the membrane as a helical segment. At 79–86 (IITILDSR) the chain is on the cytoplasmic side. The helical transmembrane segment at 87–107 (LHTPMYFFLGNLSFLDICYTS) threads the bilayer. Residues 108 to 131 (SSIPPMLIIFMSERKSISFIGCAL) lie on the Extracellular side of the membrane. C129 and C221 are disulfide-bonded. The helical transmembrane segment at 132-152 (QMVVSLGLGSTECVLLAVMAY) threads the bilayer. At 153–171 (DHYVAICNPLRYSIIMNGV) the chain is on the cytoplasmic side. A helical membrane pass occupies residues 172-192 (LYVQMAAWSWIIGCLTSLLQT). At 193-229 (VLTMMLPFCGNNVIDHITCEILALLKLVCSDITINVL) the chain is on the extracellular side. The chain crosses the membrane as a helical span at residues 230-249 (IMTVTNIVSLVILLLLIFIS). Topologically, residues 250–269 (YVFILSSILRINCAEGRKKA) are cytoplasmic. The chain crosses the membrane as a helical span at residues 270-290 (FSTCSAHSIVVILFYGSALFM). Residues 291–303 (YMKPKSKNTNTSD) are Extracellular-facing. N300 carries an N-linked (GlcNAc...) asparagine glycan. The helical transmembrane segment at 304–324 (EIIGLSYGVVSPMLNPIIYSL) threads the bilayer. Residues 325–346 (RNKEVKEAVKKVLSRHLHLLKM) lie on the Cytoplasmic side of the membrane.

It belongs to the G-protein coupled receptor 1 family.

It is found in the cell membrane. Its function is as follows. Odorant receptor. The chain is Olfactory receptor 13D1 (OR13D1) from Homo sapiens (Human).